A 368-amino-acid chain; its full sequence is Cyclic di-GMP phosphodiesterase TM_0186 (368 aa).

The Response regulatory domain maps to 2 to 114 (TVLIVEDDDI…LLRLKITHAL (113 aa)). Aspartate 49 is modified (4-aspartylphosphate). The HD-GYP domain occupies 148-345 (YEDFLFEVLE…ITDVYRREKD (198 aa)). A divalent metal cation contacts are provided by glutamate 169, histidine 173, histidine 205, aspartate 206, histidine 234, histidine 260, histidine 261, and aspartate 289. Positions 341–368 (RREKDEDTSHNGGRSHQSSPGEGVEGIR) are disordered. Positions 350-360 (HNGGRSHQSSP) are enriched in polar residues.

It catalyses the reaction 3',3'-c-di-GMP + 2 H2O = 2 GMP + 2 H(+). With respect to regulation, can function in vivo with either divalent iron or manganese occupying di- and trimetal sites. Dimetal is necessary and sufficient to catalyze conversion of c-di-GMP to pGpG, but conversion of pGpG to GMP requires an occupied trimetal site. Phosphodiesterase (PDE) that catalyzes the hydrolysis of cyclic diguanylate (c-di-GMP) to GMP. Hydrolyzes c-di-GMP to GMP in a two-step reaction, via the linear intermediate 5'-phosphoguanylyl(3'-&gt;5')guanosine (pGpG). This chain is Cyclic di-GMP phosphodiesterase TM_0186, found in Thermotoga maritima (strain ATCC 43589 / DSM 3109 / JCM 10099 / NBRC 100826 / MSB8).